The sequence spans 227 residues: Ribosomal RNA large subunit methyltransferase E (227 aa).

5 residues coordinate S-adenosyl-L-methionine: Gly-78, Trp-80, Asp-103, Asp-119, and Asp-143. The active-site Proton acceptor is Lys-183.

It belongs to the class I-like SAM-binding methyltransferase superfamily. RNA methyltransferase RlmE family.

It is found in the cytoplasm. The enzyme catalyses uridine(2552) in 23S rRNA + S-adenosyl-L-methionine = 2'-O-methyluridine(2552) in 23S rRNA + S-adenosyl-L-homocysteine + H(+). Its function is as follows. Specifically methylates the uridine in position 2552 of 23S rRNA at the 2'-O position of the ribose in the fully assembled 50S ribosomal subunit. The sequence is that of Ribosomal RNA large subunit methyltransferase E from Rickettsia canadensis (strain McKiel).